Reading from the N-terminus, the 197-residue chain is RILP-like protein 2 (197 aa).

The region spanning 14-96 (EDEGALAKSP…KQEVEGLRRA (83 aa)) is the RH1 domain. Residues 65–153 (LEALVNEGSL…VQEELQCYRS (89 aa)) are a coiled coil. Residues 119 to 184 (RPRFTLQELR…GNGEKEERTI (66 aa)) form the RH2 domain.

As to quaternary structure, homodimer. Interacts (via N-terminus) with MYO5A, the interaction is required for its role in dendrite formation. Interacts with RAC1. Interacts with RAB8A; interaction is dependent on the phosphorylation of RAB8A on 'Thr-72'. Interacts with RAB10 and RAB12; interaction is dependent on the phosphorylation of 'Thr-73' on RAB10 and 'Ser-105' on RAB12.

It localises to the cytoplasm. Its subcellular location is the cytosol. The protein localises to the cytoskeleton. The protein resides in the microtubule organizing center. It is found in the centrosome. It localises to the cell projection. Its subcellular location is the cilium. Its function is as follows. Involved in cell shape and neuronal morphogenesis, positively regulating the establishment and maintenance of dendritic spines. Plays a role in cellular protein transport, including protein transport away from primary cilia. May function via activation of RAC1 and PAK1. The polypeptide is RILP-like protein 2 (Rilpl2) (Rattus norvegicus (Rat)).